Reading from the N-terminus, the 297-residue chain is Formamidopyrimidine-DNA glycosylase (297 aa).

The active-site Schiff-base intermediate with DNA is the P2. Residue E3 is the Proton donor of the active site. The active-site Proton donor; for beta-elimination activity is the K58. H104, R127, and K170 together coordinate DNA. Residues 261 to 297 (NVYDREGEACRTPGCTGTVERMTQAGRSTFHCPQCQR) form an FPG-type zinc finger. R287 functions as the Proton donor; for delta-elimination activity in the catalytic mechanism.

This sequence belongs to the FPG family. Monomer. Requires Zn(2+) as cofactor.

The enzyme catalyses Hydrolysis of DNA containing ring-opened 7-methylguanine residues, releasing 2,6-diamino-4-hydroxy-5-(N-methyl)formamidopyrimidine.. It carries out the reaction 2'-deoxyribonucleotide-(2'-deoxyribose 5'-phosphate)-2'-deoxyribonucleotide-DNA = a 3'-end 2'-deoxyribonucleotide-(2,3-dehydro-2,3-deoxyribose 5'-phosphate)-DNA + a 5'-end 5'-phospho-2'-deoxyribonucleoside-DNA + H(+). Functionally, involved in base excision repair of DNA damaged by oxidation or by mutagenic agents. Acts as a DNA glycosylase that recognizes and removes damaged bases. Has a preference for oxidized purines, such as 7,8-dihydro-8-oxoguanine (8-oxoG). Has AP (apurinic/apyrimidinic) lyase activity and introduces nicks in the DNA strand. Cleaves the DNA backbone by beta-delta elimination to generate a single-strand break at the site of the removed base with both 3'- and 5'-phosphates. This is Formamidopyrimidine-DNA glycosylase from Allorhizobium ampelinum (strain ATCC BAA-846 / DSM 112012 / S4) (Agrobacterium vitis (strain S4)).